The primary structure comprises 429 residues: Adenylosuccinate synthetase (429 aa).

Residues 12–18 and 40–42 contribute to the GTP site; these read GDEGKGK and GHT. The Proton acceptor role is filled by Asp-13. Mg(2+) is bound by residues Asp-13 and Gly-40. IMP contacts are provided by residues 13–16, 38–41, Thr-129, Arg-143, Gln-223, Thr-238, and Arg-302; these read DEGK and NAGH. His-41 acts as the Proton donor in catalysis. A substrate-binding site is contributed by 298–304; the sequence is VVTGRKR. Residues Arg-304, 330 to 332, and 412 to 414 each bind GTP; these read KLD and STS.

This sequence belongs to the adenylosuccinate synthetase family. Homodimer. Mg(2+) serves as cofactor.

It localises to the cytoplasm. The catalysed reaction is IMP + L-aspartate + GTP = N(6)-(1,2-dicarboxyethyl)-AMP + GDP + phosphate + 2 H(+). It participates in purine metabolism; AMP biosynthesis via de novo pathway; AMP from IMP: step 1/2. Its function is as follows. Plays an important role in the de novo pathway of purine nucleotide biosynthesis. Catalyzes the first committed step in the biosynthesis of AMP from IMP. The polypeptide is Adenylosuccinate synthetase (Bartonella henselae (strain ATCC 49882 / DSM 28221 / CCUG 30454 / Houston 1) (Rochalimaea henselae)).